The primary structure comprises 187 residues: GTP cyclohydrolase 1 (187 aa).

Cysteine 74, histidine 77, and cysteine 145 together coordinate Zn(2+).

Belongs to the GTP cyclohydrolase I family. In terms of assembly, homomer.

It carries out the reaction GTP + H2O = 7,8-dihydroneopterin 3'-triphosphate + formate + H(+). Its pathway is cofactor biosynthesis; 7,8-dihydroneopterin triphosphate biosynthesis; 7,8-dihydroneopterin triphosphate from GTP: step 1/1. The sequence is that of GTP cyclohydrolase 1 from Sulfurihydrogenibium sp. (strain YO3AOP1).